A 211-amino-acid polypeptide reads, in one-letter code: Large ribosomal subunit protein eL13 (211 aa).

Lysine 16 carries the post-translational modification N6-acetyllysine. Phosphoserine is present on residues serine 77 and serine 106. Glycyl lysine isopeptide (Lys-Gly) (interchain with G-Cter in SUMO2) cross-links involve residues lysine 123 and lysine 145. A Glycyl lysine isopeptide (Lys-Gly) (interchain with G-Cter in SUMO1); alternate cross-link involves residue lysine 174. Glycyl lysine isopeptide (Lys-Gly) (interchain with G-Cter in SUMO2); alternate cross-links involve residues lysine 174 and lysine 177. The residue at position 177 (lysine 177) is an N6-acetyllysine; alternate.

Belongs to the eukaryotic ribosomal protein eL13 family. In terms of assembly, component of the 60S large ribosomal subunit (LSU).

The protein localises to the cytoplasm. Functionally, component of the ribosome, a large ribonucleoprotein complex responsible for the synthesis of proteins in the cell. The small ribosomal subunit (SSU) binds messenger RNAs (mRNAs) and translates the encoded message by selecting cognate aminoacyl-transfer RNA (tRNA) molecules. The large subunit (LSU) contains the ribosomal catalytic site termed the peptidyl transferase center (PTC), which catalyzes the formation of peptide bonds, thereby polymerizing the amino acids delivered by tRNAs into a polypeptide chain. The nascent polypeptides leave the ribosome through a tunnel in the LSU and interact with protein factors that function in enzymatic processing, targeting, and the membrane insertion of nascent chains at the exit of the ribosomal tunnel. As part of the LSU, it is probably required for its formation and the maturation of rRNAs. Plays a role in bone development. The polypeptide is Large ribosomal subunit protein eL13 (RPL13) (Oryctolagus cuniculus (Rabbit)).